We begin with the raw amino-acid sequence, 147 residues long: Ubiquitin-conjugating enzyme E2 D2 (147 aa).

The UBC core domain maps to 1–147; that stretch reads MALKRIHKEL…AREWTQKYAM (147 aa). Cysteine 85 (glycyl thioester intermediate) is an active-site residue.

It belongs to the ubiquitin-conjugating enzyme family. Interacts with SCF (SKP1-CUL1-F-box protein) E3 ubiquitin ligase complex. Interacts with CNOT4 (via RING domain). Interacts with E3 ubiquitin-protein ligases CBLC, PJA1 and PJA2. Interacts with PDZRN3. Interacts with PPP1R11. Interacts with E3 ubiquitin-protein ligase PHF7; the interaction inhibits cleavage of PHF7 and promotes association of the complex with the nucleosome core particle.

It catalyses the reaction S-ubiquitinyl-[E1 ubiquitin-activating enzyme]-L-cysteine + [E2 ubiquitin-conjugating enzyme]-L-cysteine = [E1 ubiquitin-activating enzyme]-L-cysteine + S-ubiquitinyl-[E2 ubiquitin-conjugating enzyme]-L-cysteine.. The catalysed reaction is S-ubiquitinyl-[E1 ubiquitin-activating enzyme]-L-cysteine + [acceptor protein]-L-lysine = [E1 ubiquitin-activating enzyme]-L-cysteine + N(6)-monoubiquitinyl-[acceptor protein]-L-lysine.. The protein operates within protein modification; protein ubiquitination. In terms of biological role, accepts ubiquitin from the E1 complex and catalyzes its covalent attachment to other proteins. In vitro catalyzes 'Lys-48'-linked polyubiquitination. Mediates the selective degradation of short-lived and abnormal proteins. Functions in the E6/E6-AP-induced ubiquitination of p53/TP53. Mediates ubiquitination of PEX5 and SQSTM1 and autoubiquitination of STUB1 and TRAF6. Involved in the signal-induced conjugation and subsequent degradation of NFKBIA, FBXW2-mediated GCM1 ubiquitination and degradation, MDM2-dependent degradation of p53/TP53 and the activation of MAVS in the mitochondria by RIGI in response to viral infection. Essential for viral activation of IRF3. This is Ubiquitin-conjugating enzyme E2 D2 (UBE2D2) from Bos taurus (Bovine).